Reading from the N-terminus, the 615-residue chain is tRNA uridine 5-carboxymethylaminomethyl modification enzyme MnmG (615 aa).

Residue 11–16 participates in FAD binding; sequence GLGHAG. 278 to 292 lines the NAD(+) pocket; that stretch reads GPRYCPSLEDKVVRF.

Belongs to the MnmG family. Homodimer. Heterotetramer of two MnmE and two MnmG subunits. It depends on FAD as a cofactor.

It is found in the cytoplasm. Functionally, NAD-binding protein involved in the addition of a carboxymethylaminomethyl (cmnm) group at the wobble position (U34) of certain tRNAs, forming tRNA-cmnm(5)s(2)U34. The protein is tRNA uridine 5-carboxymethylaminomethyl modification enzyme MnmG of Myxococcus xanthus (strain DK1622).